A 220-amino-acid chain; its full sequence is Fructose-6-phosphate aldolase 1 (220 aa).

Lys85 (schiff-base intermediate with substrate) is an active-site residue.

This sequence belongs to the transaldolase family. Type 3A subfamily. In terms of assembly, homodecamer. Five subunits are arranged as a pentamer, and two ring-like pentamers pack like a donut to form the decamer.

It is found in the cytoplasm. It carries out the reaction beta-D-fructose 6-phosphate = dihydroxyacetone + D-glyceraldehyde 3-phosphate. Its activity is regulated as follows. Inhibited by glycerol, inorganic phosphate and arabinose 5-phosphate. Its function is as follows. Catalyzes the reversible formation of fructose 6-phosphate from dihydroxyacetone (DHA) and D-glyceraldehyde 3-phosphate via an aldolization reaction. Can utilize several aldehydes as acceptor compounds in vitro, and hydroxyacetone (HA) or 1-hydroxy-butan-2-one as alternative donor substrate. Is also able to catalyze the direct stereoselective self-aldol addition of glycolaldehyde to furnish D-(-)-threose, and cross-aldol reactions of glycolaldehyde to other aldehyde acceptors. Is not able to cleave fructose, fructose 1-phosphate, glucose 6-phosphate, sedoheptulose 1,7-bisphosphate, xylulose 5-phosphate, ribulose 5-phosphate, and fructose 1,6-bisphosphate; cannot use dihydroxyacetone phosphate as donor compound nor D-glyceraldehyde as acceptor. Does not display transaldolase activity. This is Fructose-6-phosphate aldolase 1 (fsaA) from Escherichia coli (strain K12).